The primary structure comprises 541 residues: MAGAIIENMSTKKLCMVGVALLLLQVLAFLVGGLIAPKPTTYVNPVAMKCIDVRKSHRSSKWLMPWGTEPCKSIQSFDEAANRLIEANDIVFAAHIPNSQFEMSPWFQFMLVVLQLDIAFKLNNYIEDHSMVTLDVAVAYRDDLKEEWKELARSVEQRKLNCILPVDKTVANEGRHYDCDVIPLMELGSVSHKYYLFNIRLPVNERQKMNIGIGEIRDMHVVSIFQNGGFTMVWFAMKTFLTPCIIIIMIWYWRRITMMTRSPVLLEKVIFALGISMTFINIPVEWFSIGYDWTWMLLFGDIRQGIFYAMLLSFWIIFCGEHMMDQAERNRISIYWKQVGPIAFGSCCLFIFDMCERGVQLKNPFYSIWTTDVGAEIAMAFIIVAGICACLYFLFLCFMVYQVFRNISGKRSNLPAMSKARRLHYEGLIFRFKFLMIITLACAALTVVFFITTQITEGNWKLGDLSIELNSAFFTGIYGMWNLYVFALMFLYAPSHKHYGDGQSNDGAGMSSGEELQLTTTITHIDGPTELYRLAGKEAQE.

The Cytoplasmic segment spans residues 1-15 (MAGAIIENMSTKKLC). The chain crosses the membrane as a helical span at residues 16-36 (MVGVALLLLQVLAFLVGGLIA). At 37-232 (PKPTTYVNPV…SIFQNGGFTM (196 aa)) the chain is on the lumenal side. The chain crosses the membrane as a helical span at residues 233 to 253 (VWFAMKTFLTPCIIIIMIWYW). Residues 254 to 268 (RRITMMTRSPVLLEK) are Cytoplasmic-facing. The chain crosses the membrane as a helical span at residues 269–289 (VIFALGISMTFINIPVEWFSI). Topologically, residues 290–303 (GYDWTWMLLFGDIR) are lumenal. The chain crosses the membrane as a helical span at residues 304–324 (QGIFYAMLLSFWIIFCGEHMM). Residues 325 to 331 (DQAERNR) are Cytoplasmic-facing. A helical transmembrane segment spans residues 332–352 (ISIYWKQVGPIAFGSCCLFIF). Residues 353–379 (DMCERGVQLKNPFYSIWTTDVGAEIAM) lie on the Lumenal side of the membrane. A helical membrane pass occupies residues 380–400 (AFIIVAGICACLYFLFLCFMV). Topologically, residues 401–431 (YQVFRNISGKRSNLPAMSKARRLHYEGLIFR) are cytoplasmic. A helical transmembrane segment spans residues 432–452 (FKFLMIITLACAALTVVFFIT). Residues 453–471 (TQITEGNWKLGDLSIELNS) are Lumenal-facing. The chain crosses the membrane as a helical span at residues 472–492 (AFFTGIYGMWNLYVFALMFLY). Residues 493–541 (APSHKHYGDGQSNDGAGMSSGEELQLTTTITHIDGPTELYRLAGKEAQE) are Cytoplasmic-facing.

This sequence belongs to the wntless family. In terms of tissue distribution, enriched in the animal hemisphere of the early cleavage embryo, where expression persists until the late gastrula stage. At the neurula stage, strongly expressed at the border of the neural plate and dorsal midline. After the neurula stage, expressed in various organs, including the eye, liver, heart, pronephros, otic vesicle, and dorsal neural tube. Expression in the developing eye is dynamic; expressed in the eye field from stages 23 to 27, and from stage 30 expression is confined to distinct regions including the central part and border of the eye.

It is found in the golgi apparatus membrane. Its subcellular location is the cytoplasmic vesicle membrane. In terms of biological role, required for a subset of Wnt-dependent developmental processes, in particular, eye and pronephros development. Regulates the secretion of wnt4, which is required for eye development. The protein is Protein wntless homolog B (wls-b) of Xenopus laevis (African clawed frog).